We begin with the raw amino-acid sequence, 371 residues long: Neuropeptide Y receptor type 6 (371 aa).

The Extracellular portion of the chain corresponds to 1–31; it reads MEVLTNQPTPNKTSGKSNNSAFFYFESCQPP. Asparagine 11 and asparagine 18 each carry an N-linked (GlcNAc...) asparagine glycan. A helical membrane pass occupies residues 32–52; the sequence is FLAILLLLIAYTVILIMGIFG. Topologically, residues 53-82 are cytoplasmic; it reads NLSLIIIIFKKQREAQNVTNILIANLSLSD. A helical transmembrane segment spans residues 83–103; that stretch reads ILVCVMCIPFTVIYTLMDHWV. The Extracellular portion of the chain corresponds to 104-111; the sequence is FGNTMCKL. Cysteine 109 and cysteine 196 are joined by a disulfide. Residues 112 to 132 form a helical membrane-spanning segment; that stretch reads TSYVQSVSVSVSIFSLVLIAI. The Cytoplasmic segment spans residues 133 to 150; sequence ERYQLIVNPRGWKPRVAH. A helical transmembrane segment spans residues 151–171; it reads AYWGIILIWLISLTLSIPLFL. Residues 172–206 lie on the Extracellular side of the membrane; it reads SYHLTNEPFHNLSLPTDIYTHQVACVEIWPSKLNQ. N-linked (GlcNAc...) asparagine glycosylation is present at asparagine 182. The helical transmembrane segment at 207–227 threads the bilayer; that stretch reads LLFSTSLFMLQYFVPLGFILI. Residues 228–263 are Cytoplasmic-facing; it reads CYLKIVLCLRKRTRQVDRRKENKSRLNENKRVNVML. A helical membrane pass occupies residues 264–284; the sequence is ISIVVTFGACWLPLNIFNVIF. Topologically, residues 285–297 are extracellular; that stretch reads DWYHEMLMSCHHD. Residues 298–318 form a helical membrane-spanning segment; sequence LVFVVCHLIAMVSTCINPLFY. Topologically, residues 319–371 are cytoplasmic; that stretch reads GFLNKNFQKDLMMLIHHCWCGEPQESYENIAMSTMHTDESKGSLKLAHIPTGI. Cysteine 336 carries the S-palmitoyl cysteine lipid modification.

This sequence belongs to the G-protein coupled receptor 1 family. As to expression, kidney and discrete regions of the hypothalamus including the suprachiasmatic nucleus, anterior hypothalamus, bed nucleus stria terminalis, and the ventromedial nucleus.

The protein localises to the cell membrane. In terms of biological role, receptor for neuropeptide Y and peptide YY. The rank order of affinity of this receptor for pancreatic polypeptides is NPY = PYY &gt;= NPY (2-36) = [Leu-31, Pro-34] NPY &gt; NPY (13-36) &gt; PP. The activity of this receptor is mediated by G proteins that inhibits adenylate cyclase activity. This is Neuropeptide Y receptor type 6 (Npy6r) from Mus musculus (Mouse).